Here is a 773-residue protein sequence, read N- to C-terminus: Mitogen-activated protein kinase kinase kinase 9 (773 aa).

The span at 1–14 shows a compositional bias: basic and acidic residues; it reads MKKSSDKSPVRQHD. The disordered stretch occupies residues 1 to 35; the sequence is MKKSSDKSPVRQHDTATQINSDAVSSSTSFTDSDS. Positions 21 to 35 are enriched in low complexity; it reads SDAVSSSTSFTDSDS. Phosphoserine is present on residues serine 79 and serine 150. The regulatory region stretch occupies residues 100-493; that stretch reads FDKILALMKK…VSNTSPICVS (394 aa). Position 365 is a phosphoserine; by MAPK4 (serine 365). The segment at 426–455 is disordered; sequence EIVRRPSSSSSSENGCDEEEAEDDKVEKEE. The segment covering 440-449 has biased composition (acidic residues); the sequence is GCDEEEAEDD. Residues 501 to 755 form the Protein kinase domain; it reads WQKGQLLRQG…ATELLNHPFV (255 aa). Residues 507-515 and lysine 529 contribute to the ATP site; that span reads LRQGSFGSV. Aspartate 624 (proton acceptor) is an active-site residue. At serine 768 the chain carries Phosphoserine.

Belongs to the protein kinase superfamily. STE Ser/Thr protein kinase family. MAP kinase kinase kinase subfamily. As to quaternary structure, interacts with MPK4. Post-translationally, phosphorylated by MPK4 upon treatment with flg22. In terms of tissue distribution, expressed at least in rosette leaves (at protein level).

The enzyme catalyses L-seryl-[protein] + ATP = O-phospho-L-seryl-[protein] + ADP + H(+). It carries out the reaction L-threonyl-[protein] + ATP = O-phospho-L-threonyl-[protein] + ADP + H(+). In terms of biological role, triggers SUMM2-mediated immune responses, including cell death and defense responses. Probably inhibited by the MEKK1-MKK1/ MKK2-MPK4 kinase cascade to adjust plant defense. Seems to contribute in transducing external glutamate (L-Glu) signal that elicits large-scale changes in root architecture. This Arabidopsis thaliana (Mouse-ear cress) protein is Mitogen-activated protein kinase kinase kinase 9.